Reading from the N-terminus, the 377-residue chain is 4-hydroxy-3-methylbut-2-en-1-yl diphosphate synthase (flavodoxin) (377 aa).

The [4Fe-4S] cluster site is built by cysteine 270, cysteine 273, cysteine 305, and glutamate 312.

The protein belongs to the IspG family. The cofactor is [4Fe-4S] cluster.

The catalysed reaction is (2E)-4-hydroxy-3-methylbut-2-enyl diphosphate + oxidized [flavodoxin] + H2O + 2 H(+) = 2-C-methyl-D-erythritol 2,4-cyclic diphosphate + reduced [flavodoxin]. The protein operates within isoprenoid biosynthesis; isopentenyl diphosphate biosynthesis via DXP pathway; isopentenyl diphosphate from 1-deoxy-D-xylulose 5-phosphate: step 5/6. Its function is as follows. Converts 2C-methyl-D-erythritol 2,4-cyclodiphosphate (ME-2,4cPP) into 1-hydroxy-2-methyl-2-(E)-butenyl 4-diphosphate. This chain is 4-hydroxy-3-methylbut-2-en-1-yl diphosphate synthase (flavodoxin), found in Bacillus subtilis (strain 168).